Consider the following 267-residue polypeptide: Hydroxyethylthiazole kinase (267 aa).

Residue Met48 participates in substrate binding. Residues Arg124 and Ser170 each contribute to the ATP site. Gly197 provides a ligand contact to substrate.

Belongs to the Thz kinase family. It depends on Mg(2+) as a cofactor.

It carries out the reaction 5-(2-hydroxyethyl)-4-methylthiazole + ATP = 4-methyl-5-(2-phosphooxyethyl)-thiazole + ADP + H(+). It functions in the pathway cofactor biosynthesis; thiamine diphosphate biosynthesis; 4-methyl-5-(2-phosphoethyl)-thiazole from 5-(2-hydroxyethyl)-4-methylthiazole: step 1/1. Its function is as follows. Catalyzes the phosphorylation of the hydroxyl group of 4-methyl-5-beta-hydroxyethylthiazole (THZ). In Aliivibrio fischeri (strain ATCC 700601 / ES114) (Vibrio fischeri), this protein is Hydroxyethylthiazole kinase.